A 265-amino-acid polypeptide reads, in one-letter code: Hydroxyacylglutathione hydrolase (265 aa).

Residues His53, His55, Asp57, His58, His109, Asp126, and His164 each contribute to the Zn(2+) site.

It belongs to the metallo-beta-lactamase superfamily. Glyoxalase II family. As to quaternary structure, monomer. Zn(2+) serves as cofactor.

The enzyme catalyses an S-(2-hydroxyacyl)glutathione + H2O = a 2-hydroxy carboxylate + glutathione + H(+). It functions in the pathway secondary metabolite metabolism; methylglyoxal degradation; (R)-lactate from methylglyoxal: step 2/2. Thiolesterase that catalyzes the hydrolysis of S-D-lactoyl-glutathione to form glutathione and D-lactic acid. In Dechloromonas aromatica (strain RCB), this protein is Hydroxyacylglutathione hydrolase.